We begin with the raw amino-acid sequence, 41 residues long: Large ribosomal subunit protein bL36 (41 aa).

It belongs to the bacterial ribosomal protein bL36 family.

The chain is Large ribosomal subunit protein bL36 from Orientia tsutsugamushi (strain Boryong) (Rickettsia tsutsugamushi).